The sequence spans 830 residues: Adhesion G protein-coupled receptor E2 (830 aa).

Residues M1–A22 form the signal peptide. Residues A23–D540 are Extracellular-facing. The EGF-like 1 domain maps to K26–D68. 5 cysteine pairs are disulfide-bonded: C30-C40, C34-C46, C48-C67, C73-C87, and C81-C96. N42 carries N-linked (GlcNAc...) asparagine glycosylation. Residues D69–A108 form the EGF-like 1; calcium-binding domain. N113 is a glycosylation site (N-linked (GlcNAc...) asparagine). An EGF-like 2; calcium-binding domain is found at D121–D159. Intrachain disulfides connect C125/C138, C132/C147, C169/C182, C176/C191, C218/C231, and C225/C240. One can recognise an EGF-like 3; calcium-binding domain in the interval D165 to S203. N178 carries an N-linked (GlcNAc...) asparagine glycan. One can recognise an EGF-like 4; calcium-binding domain in the interval D214–Q253. 4 N-linked (GlcNAc...) asparagine glycosylation sites follow: N258, N348, N361, and N379. In terms of domain architecture, GAIN-B spans W358–Q537. 2 cysteine pairs are disulfide-bonded: C489-C519 and C507-C521. Positions C489 to Q537 are GPS. The helical transmembrane segment at L541 to A561 threads the bilayer. Residues A562–T576 are Cytoplasmic-facing. Residues S577 to I597 traverse the membrane as a helical segment. The Extracellular segment spans residues D598 to K603. Residues V604 to M624 traverse the membrane as a helical segment. Residues L625–K651 are Cytoplasmic-facing. A helical transmembrane segment spans residues K652–S672. The Extracellular portion of the chain corresponds to R673–R690. Residues F691 to L711 form a helical membrane-spanning segment. The Cytoplasmic portion of the chain corresponds to M712–Q744. The chain crosses the membrane as a helical span at residues L745–V765. Topologically, residues M766–A767 are extracellular. Residues Y768–L788 form a helical membrane-spanning segment. Topologically, residues S789 to N830 are cytoplasmic.

Belongs to the G-protein coupled receptor 2 family. Adhesion G-protein coupled receptor (ADGR) subfamily. Forms a heterodimer, consisting of a large extracellular region non-covalently linked to a seven-transmembrane moiety. Interacts with chondroitin sulfate; the interaction with chondroitin sulfate is calcium-dependent. Interacts with CD55. Post-translationally, autoproteolytically cleaved into 2 subunits, an extracellular alpha subunit and a seven-transmembrane beta subunit.

It is found in the cell membrane. Its subcellular location is the cell projection. The protein localises to the ruffle membrane. Its function is as follows. Cell surface receptor that binds to the chondroitin sulfate moiety of glycosaminoglycan chains and promotes cell attachment. Promotes granulocyte chemotaxis, degranulation and adhesion. In macrophages, promotes the release of inflammatory cytokines, including IL8 and TNF. Signals probably through G-proteins. The protein is Adhesion G protein-coupled receptor E2 (ADGRE2) of Canis lupus familiaris (Dog).